A 424-amino-acid chain; its full sequence is Nicotinate phosphoribosyltransferase (424 aa).

At His-242 the chain carries Phosphohistidine; by autocatalysis.

It belongs to the NAPRTase family. Post-translationally, transiently phosphorylated on a His residue during the reaction cycle. Phosphorylation strongly increases the affinity for substrates and increases the rate of nicotinate D-ribonucleotide production. Dephosphorylation regenerates the low-affinity form of the enzyme, leading to product release.

It catalyses the reaction nicotinate + 5-phospho-alpha-D-ribose 1-diphosphate + ATP + H2O = nicotinate beta-D-ribonucleotide + ADP + phosphate + diphosphate. Its pathway is cofactor biosynthesis; NAD(+) biosynthesis; nicotinate D-ribonucleotide from nicotinate: step 1/1. Catalyzes the synthesis of beta-nicotinate D-ribonucleotide from nicotinate and 5-phospho-D-ribose 1-phosphate at the expense of ATP. The sequence is that of Nicotinate phosphoribosyltransferase from Bartonella bacilliformis (strain ATCC 35685 / KC583 / Herrer 020/F12,63).